The primary structure comprises 162 residues: Cyanate hydratase (162 aa).

Catalysis depends on residues R90, E93, and S116.

This sequence belongs to the cyanase family.

The enzyme catalyses cyanate + hydrogencarbonate + 3 H(+) = NH4(+) + 2 CO2. Catalyzes the reaction of cyanate with bicarbonate to produce ammonia and carbon dioxide. This is Cyanate hydratase from Populus trichocarpa (Western balsam poplar).